Reading from the N-terminus, the 140-residue chain is Blasticidin-S deaminase (140 aa).

Residues 8–140 enclose the CMP/dCMP-type deaminase domain; it reads QQDLELVEVA…ELIPLKYTRN (133 aa). C59 provides a ligand contact to Zn(2+). E61 (proton donor) is an active-site residue. Zn(2+) contacts are provided by C100 and C103.

It belongs to the cytidine and deoxycytidylate deaminase family. Zn(2+) serves as cofactor.

The enzyme catalyses blasticidin S + H2O + H(+) = deaminohydroxyblasticidin S + NH4(+). Its function is as follows. Catalyzes the deamination of the cytosine moiety of the antibiotics blasticidin S, cytomycin and acetylblasticidin S. In Bacillus cereus, this protein is Blasticidin-S deaminase (bsr).